The following is a 164-amino-acid chain: Peptidyl-prolyl cis-trans isomerase A (164 aa).

Methionine 1 carries the N-acetylmethionine modification. Valine 2 bears the N-acetylvaline; in Peptidyl-prolyl cis-trans isomerase A, N-terminally processed mark. In terms of domain architecture, PPIase cyclophilin-type spans 7-163 (FFDITADGEP…KKITISDCGQ (157 aa)). Lysine 28 bears the N6-acetyllysine; alternate mark. Residue lysine 28 forms a Glycyl lysine isopeptide (Lys-Gly) (interchain with G-Cter in SUMO2); alternate linkage. A Glycyl lysine isopeptide (Lys-Gly) (interchain with G-Cter in ubiquitin); alternate cross-link involves residue lysine 28. N6-acetyllysine is present on residues lysine 44 and lysine 76. Serine 77 bears the Phosphoserine mark. Lysine 82 is subject to N6-acetyllysine; alternate. Residue lysine 82 forms a Glycyl lysine isopeptide (Lys-Gly) (interchain with G-Cter in SUMO2); alternate linkage. At threonine 93 the chain carries Phosphothreonine. Residue asparagine 108 is glycosylated (N-linked (GlcNAc...) asparagine). Residues lysine 125, lysine 131, and lysine 133 each carry the N6-acetyllysine modification.

The protein belongs to the cyclophilin-type PPIase family. PPIase A subfamily. In terms of assembly, interacts with protein phosphatase PPP3CA/calcineurin A. Interacts with isoform 2 of BSG/CD147. Interacts with FOXO1; the interaction promotes FOXO1 dephosphorylation, nuclear accumulation and transcriptional activity. Interacts with integrin ITGA2B:ITGB3; the interaction is ROS and peptidyl-prolyl cis-trans isomerase (PPIase) activity-dependent and is increased in the presence of thrombin. Interacts with MAP3K5. Interacts with TARDBP; the interaction is dependent on the RNA-binding activity of TARDBP and the PPIase activity of PPIA/CYPA and the acetylation of PPIA/CYPA at Lys-125 favors the interaction. Interacts with HNRNPA1, HNRNPA2B1, HNRNPC, RBMX, HNRNPK and HNRNPM. In terms of processing, acetylation at Lys-125 markedly inhibits catalysis of cis to trans isomerization. PPIA acetylation also antagonizes the immunosuppressive effects of cyclosporine by inhibiting the sequential steps of cyclosporine binding and calcineurin inhibition. Acetylation at Lys-125 favors the interaction with TARDBP.

It localises to the cytoplasm. It is found in the secreted. Its subcellular location is the nucleus. It catalyses the reaction [protein]-peptidylproline (omega=180) = [protein]-peptidylproline (omega=0). Its activity is regulated as follows. Binds cyclosporin A (CsA). CsA mediates some of its effects via an inhibitory action on PPIase. In terms of biological role, catalyzes the cis-trans isomerization of proline imidic peptide bonds in oligopeptides. Exerts a strong chemotactic effect on leukocytes partly through activation of one of its membrane receptors BSG/CD147, initiating a signaling cascade that culminates in MAPK/ERK activation. Activates endothelial cells (ECs) in a proinflammatory manner by stimulating activation of NF-kappa-B and ERK, JNK and p38 MAP-kinases and by inducing expression of adhesion molecules including SELE and VCAM1. Induces apoptosis in ECs by promoting the FOXO1-dependent expression of CCL2 and BCL2L11 which are involved in EC chemotaxis and apoptosis. In response to oxidative stress, initiates proapoptotic and antiapoptotic signaling in ECs via activation of NF-kappa-B and AKT1 and up-regulation of antiapoptotic protein BCL2. Negatively regulates MAP3K5/ASK1 kinase activity, autophosphorylation and oxidative stress-induced apoptosis mediated by MAP3K5/ASK1. Necessary for the assembly of TARDBP in heterogeneous nuclear ribonucleoprotein (hnRNP) complexes and regulates TARDBP binding to RNA UG repeats and TARDBP-dependent expression of HDAC6, ATG7 and VCP which are involved in clearance of protein aggregates. Plays an important role in platelet activation and aggregation. Regulates calcium mobilization and integrin ITGA2B:ITGB3 bidirectional signaling via increased ROS production as well as by facilitating the interaction between integrin and the cell cytoskeleton. Binds heparan sulfate glycosaminoglycans. The protein is Peptidyl-prolyl cis-trans isomerase A (Ppia) of Rattus norvegicus (Rat).